The primary structure comprises 696 residues: MAQAGPTPQQAIARLRAEIEQHNIRYYVHDDPSVPDAEYDALMRDLQALEAEHPELVTPDSPTQRVGAAPLAEFGSVRHAVPMLSLGNAFDEEDVRAFDKRVADTLRGAGLLGLDQQVEYFCELKLDGLAISLRYEEGRLAQAATRGDGQTGEDVTANIRTIKGVPLRLHGAPRVLEVRGEVLMNRAEFERLNRTQAARGEKVFVNPRNAAAGSLRQLDPRITAQRPLRFFAYSWGEVHGLPEGMPTRFDEPAPGVRVASTLPRDTHGGMLDWLAELGLPVNLRHNHRERGADGLLAFYERIGKLRADLPYDIDGVVYKVDALPSQRVLGFVARAPRFALAHKFPAEEAVTQLLGIEVQVGRTGAITPVARLAPVFVGGVTVTNATLHNEDEIRRKDVRIGDTVIVRRAGDVIPEVVGPVLEKRPADAREFVMLTACPICGSAIERPEGEAIARCTGGLFCAAQRKQTLLHAAGRKALDIEGLGEKLIDQLVDADRVKSLADIYSLTAFELAALERMGKKSAENLVAAIDQARRPALGRLLFALGIRHVGETTARDVARHFGSMERIMDASEEALLAVPDVGGVVAGSIRRFFAEPHNREIVEQLTQQGVHPQAEAEPEGTSLAGKTFVLTGTMPNWTRDEATRRILAAGGKVSGSVSKKTAYLVTGEDAGSKLTKAQELGVPVLDEDGLKALLGL.

NAD(+) contacts are provided by residues 36-40 (DAEYD), 85-86 (SL), and E123. Residue K125 is the N6-AMP-lysine intermediate of the active site. R146, E181, K319, and K343 together coordinate NAD(+). 4 residues coordinate Zn(2+): C437, C440, C455, and C461. One can recognise a BRCT domain in the interval 618–696 (PEGTSLAGKT…EDGLKALLGL (79 aa)).

The protein belongs to the NAD-dependent DNA ligase family. LigA subfamily. Mg(2+) is required as a cofactor. Mn(2+) serves as cofactor.

It carries out the reaction NAD(+) + (deoxyribonucleotide)n-3'-hydroxyl + 5'-phospho-(deoxyribonucleotide)m = (deoxyribonucleotide)n+m + AMP + beta-nicotinamide D-nucleotide.. DNA ligase that catalyzes the formation of phosphodiester linkages between 5'-phosphoryl and 3'-hydroxyl groups in double-stranded DNA using NAD as a coenzyme and as the energy source for the reaction. It is essential for DNA replication and repair of damaged DNA. The sequence is that of DNA ligase from Bordetella bronchiseptica (strain ATCC BAA-588 / NCTC 13252 / RB50) (Alcaligenes bronchisepticus).